A 299-amino-acid chain; its full sequence is Coenzyme PQQ synthesis protein B (299 aa).

This sequence belongs to the PqqB family.

It participates in cofactor biosynthesis; pyrroloquinoline quinone biosynthesis. May be involved in the transport of PQQ or its precursor to the periplasm. This is Coenzyme PQQ synthesis protein B from Methylorubrum extorquens (strain ATCC 14718 / DSM 1338 / JCM 2805 / NCIMB 9133 / AM1) (Methylobacterium extorquens).